The chain runs to 99 residues: Large ribosomal subunit protein uL23cz/uL23cy (99 aa).

The tract at residues 1–37 (MGGVENPVSTDKAIRLPERKQYSSNAEPNPSKTEVKR) is disordered. The segment covering 12–21 (KAIRLPERKQ) has biased composition (basic and acidic residues). A compositionally biased stretch (polar residues) spans 22–32 (YSSNAEPNPSK).

This sequence belongs to the universal ribosomal protein uL23 family. As to quaternary structure, part of the 50S ribosomal subunit.

It localises to the plastid. It is found in the chloroplast. Functionally, binds to 23S rRNA. This chain is Large ribosomal subunit protein uL23cz/uL23cy (rpl23-A), found in Selaginella uncinata (Blue spike-moss).